Reading from the N-terminus, the 340-residue chain is uncharacterized protein (340 aa).

Positions 1–23 (MQKKVLSLVLVLAVLESIVPVSA) are cleaved as a signal peptide.

This is an uncharacterized protein from Archaeoglobus fulgidus (strain ATCC 49558 / DSM 4304 / JCM 9628 / NBRC 100126 / VC-16).